Here is a 146-residue protein sequence, read N- to C-terminus: Large-conductance mechanosensitive channel (146 aa).

A run of 2 helical transmembrane segments spans residues 12–32 (AFAM…GGAF) and 83–103 (GNFL…FLFI).

This sequence belongs to the MscL family. As to quaternary structure, homopentamer.

It is found in the cell inner membrane. In terms of biological role, channel that opens in response to stretch forces in the membrane lipid bilayer. May participate in the regulation of osmotic pressure changes within the cell. The protein is Large-conductance mechanosensitive channel of Phocaeicola vulgatus (strain ATCC 8482 / DSM 1447 / JCM 5826 / CCUG 4940 / NBRC 14291 / NCTC 11154) (Bacteroides vulgatus).